The chain runs to 249 residues: Ribonuclease 3 (249 aa).

The 130-residue stretch at Phe-20–Gly-149 folds into the RNase III domain. A Mg(2+)-binding site is contributed by Glu-62. Residue Asp-66 is part of the active site. Mg(2+) is bound by residues Asp-135 and Glu-138. The active site involves Glu-138. The DRBM domain maps to Asp-175–Lys-244. The tract at residues Arg-225 to Gln-249 is disordered.

Belongs to the ribonuclease III family. As to quaternary structure, homodimer. Mg(2+) is required as a cofactor.

The protein resides in the cytoplasm. The enzyme catalyses Endonucleolytic cleavage to 5'-phosphomonoester.. In terms of biological role, digests double-stranded RNA. Involved in the processing of primary rRNA transcript to yield the immediate precursors to the large and small rRNAs (23S and 16S). Processes some mRNAs, and tRNAs when they are encoded in the rRNA operon. Processes pre-crRNA and tracrRNA of type II CRISPR loci if present in the organism. The polypeptide is Ribonuclease 3 (Bacillus licheniformis (strain ATCC 14580 / DSM 13 / JCM 2505 / CCUG 7422 / NBRC 12200 / NCIMB 9375 / NCTC 10341 / NRRL NRS-1264 / Gibson 46)).